A 305-amino-acid chain; its full sequence is Methionyl-tRNA formyltransferase (305 aa).

Residue 111–114 coordinates (6S)-5,6,7,8-tetrahydrofolate; sequence SLLP.

The protein belongs to the Fmt family.

The catalysed reaction is L-methionyl-tRNA(fMet) + (6R)-10-formyltetrahydrofolate = N-formyl-L-methionyl-tRNA(fMet) + (6S)-5,6,7,8-tetrahydrofolate + H(+). Attaches a formyl group to the free amino group of methionyl-tRNA(fMet). The formyl group appears to play a dual role in the initiator identity of N-formylmethionyl-tRNA by promoting its recognition by IF2 and preventing the misappropriation of this tRNA by the elongation apparatus. This is Methionyl-tRNA formyltransferase from Helicobacter pylori (strain HPAG1).